The chain runs to 786 residues: AT-rich interactive domain-containing protein 3 (786 aa).

The segment covering 1–16 (MENLTEIESTMESLTE) has biased composition (low complexity). Disordered stretches follow at residues 1–182 (MENL…HHAD), 199–251 (SGDH…IPAN), and 395–420 (DTTV…NSSA). Composition is skewed to basic and acidic residues over residues 18–64 (ESER…HEDS) and 87–97 (DLPKIDDEKNS). Residues 130–139 (ENIVSSEVSS) are compositionally biased toward low complexity. 5 stretches are compositionally biased toward basic and acidic residues: residues 141 to 156 (ILKD…RDTA), 169 to 182 (KLSE…HHAD), 199 to 219 (SGDH…ENQS), 234 to 248 (AEER…HKEI), and 402 to 416 (NNKD…ERQD). One can recognise an ARID domain in the interval 494-585 (EEDQSAFMKE…ALLEYERHKV (92 aa)). Residues 606–638 (QASGSGRARRDAASRAMQGWHSQRLNGNGEVSD) form a disordered region. The 101-residue stretch at 686–786 (VTVVDVGPPA…FVRVPLEQLE (101 aa)) folds into the sHSP domain.

This sequence belongs to the small heat shock protein (HSP20) family.

Its subcellular location is the nucleus. The chain is AT-rich interactive domain-containing protein 3 (ARID3) from Arabidopsis thaliana (Mouse-ear cress).